Here is a 604-residue protein sequence, read N- to C-terminus: Kelch-like protein 15 (604 aa).

The BTB domain occupies 31 to 98 (LDVTLLIEEH…MYYGSLELSM (68 aa)). The 105-residue stretch at 133–237 (CAEVMRLLED…TPANIFEKVK (105 aa)) folds into the BACK domain. 5 Kelch repeats span residues 328-379 (FAFL…VIGK), 381-426 (IYAV…VLNG), 428-473 (LYIT…NKSK), 489-542 (KLYV…VLDK), and 544-592 (IMVL…SLHF).

It is found in the nucleus. The protein operates within protein modification; protein ubiquitination. Functionally, substrate-specific adapter for an E3 ubiquitin-protein ligase complex. The protein is Kelch-like protein 15 (klhl15) of Danio rerio (Zebrafish).